Reading from the N-terminus, the 339-residue chain is Putative agmatine deiminase (339 aa).

C331 serves as the catalytic Amidino-cysteine intermediate.

It belongs to the agmatine deiminase family.

The catalysed reaction is agmatine + H2O = N-carbamoylputrescine + NH4(+). The chain is Putative agmatine deiminase from Streptomyces coelicolor (strain ATCC BAA-471 / A3(2) / M145).